We begin with the raw amino-acid sequence, 647 residues long: DNA topoisomerase 4 subunit B (647 aa).

ATP contacts are provided by residues tyrosine 11, asparagine 51, aspartate 78, 118 to 124, and lysine 344; that span reads GLHGVGS. Basic and acidic residues predominate over residues 391 to 401; sequence AARKARDESRN. The segment at 391-421 is disordered; that stretch reads AARKARDESRNGKKNKKDKGLLSGKLTPAQS. Residues 427 to 541 form the Toprim domain; it reads NELYLVEGDS…AGHVYIALPP (115 aa). The Mg(2+) site is built by glutamate 433, aspartate 506, and aspartate 508.

Belongs to the type II topoisomerase family. ParE type 2 subfamily. As to quaternary structure, heterotetramer composed of ParC and ParE. The cofactor is Mg(2+). Requires Mn(2+) as cofactor. Ca(2+) is required as a cofactor.

It catalyses the reaction ATP-dependent breakage, passage and rejoining of double-stranded DNA.. Its activity is regulated as follows. Inhibited by quinolones, such as levofloxacin. Functionally, topoisomerase IV is essential for chromosome segregation. It relaxes supercoiled DNA. Performs the decatenation events required during the replication of a circular DNA molecule. The polypeptide is DNA topoisomerase 4 subunit B (Streptococcus pneumoniae serotype 4 (strain ATCC BAA-334 / TIGR4)).